The sequence spans 576 residues: Proline--tRNA ligase (576 aa).

It belongs to the class-II aminoacyl-tRNA synthetase family. ProS type 1 subfamily. In terms of assembly, homodimer.

The protein localises to the cytoplasm. The enzyme catalyses tRNA(Pro) + L-proline + ATP = L-prolyl-tRNA(Pro) + AMP + diphosphate. In terms of biological role, catalyzes the attachment of proline to tRNA(Pro) in a two-step reaction: proline is first activated by ATP to form Pro-AMP and then transferred to the acceptor end of tRNA(Pro). As ProRS can inadvertently accommodate and process non-cognate amino acids such as alanine and cysteine, to avoid such errors it has two additional distinct editing activities against alanine. One activity is designated as 'pretransfer' editing and involves the tRNA(Pro)-independent hydrolysis of activated Ala-AMP. The other activity is designated 'posttransfer' editing and involves deacylation of mischarged Ala-tRNA(Pro). The misacylated Cys-tRNA(Pro) is not edited by ProRS. This is Proline--tRNA ligase from Bordetella bronchiseptica (strain ATCC BAA-588 / NCTC 13252 / RB50) (Alcaligenes bronchisepticus).